The chain runs to 261 residues: Cytochrome c oxidase subunit 3 (261 aa).

Over 1–15 (MTHQTHAYHMVNPSP) the chain is Mitochondrial matrix. A helical membrane pass occupies residues 16-34 (WPLTGALSALLMTSGLIMW). At 35–40 (FHFNSM) the chain is on the mitochondrial intermembrane side. A helical membrane pass occupies residues 41–66 (YLLMLGLTTNTLTMYQWWRDIVREST). At 67-72 (FQGHHT) the chain is on the mitochondrial matrix side. The chain crosses the membrane as a helical span at residues 73-105 (PIVQKGLRYGMILFIVSEVFFFAGFFWAFYHSS). Residues 106–128 (LAPTPELGGCWPPTGITPLNPME) lie on the Mitochondrial intermembrane side of the membrane. The helical transmembrane segment at 129–152 (VPLLNTSVLLASGVSITWAHHSLM) threads the bilayer. The Mitochondrial matrix portion of the chain corresponds to 153–155 (EGN). The chain crosses the membrane as a helical span at residues 156–183 (RKHMLQALFITISLGVYFTLLQASEYYE). Topologically, residues 184–190 (TPFTISD) are mitochondrial intermembrane. The chain crosses the membrane as a helical span at residues 191–223 (GIYGSTFFMATGFHGLHVIIGSTFLIVCFMRQL). Over 224–232 (KFHFTSNHH) the chain is Mitochondrial matrix. The chain crosses the membrane as a helical span at residues 233-256 (FGFEAAAWYWHFVDVVWLFLYVSI). Over 257-261 (YWWGS) the chain is Mitochondrial intermembrane.

Belongs to the cytochrome c oxidase subunit 3 family. In terms of assembly, component of the cytochrome c oxidase (complex IV, CIV), a multisubunit enzyme composed of 14 subunits. The complex is composed of a catalytic core of 3 subunits MT-CO1, MT-CO2 and MT-CO3, encoded in the mitochondrial DNA, and 11 supernumerary subunits COX4I, COX5A, COX5B, COX6A, COX6B, COX6C, COX7A, COX7B, COX7C, COX8 and NDUFA4, which are encoded in the nuclear genome. The complex exists as a monomer or a dimer and forms supercomplexes (SCs) in the inner mitochondrial membrane with NADH-ubiquinone oxidoreductase (complex I, CI) and ubiquinol-cytochrome c oxidoreductase (cytochrome b-c1 complex, complex III, CIII), resulting in different assemblies (supercomplex SCI(1)III(2)IV(1) and megacomplex MCI(2)III(2)IV(2)).

It is found in the mitochondrion inner membrane. The catalysed reaction is 4 Fe(II)-[cytochrome c] + O2 + 8 H(+)(in) = 4 Fe(III)-[cytochrome c] + 2 H2O + 4 H(+)(out). Its function is as follows. Component of the cytochrome c oxidase, the last enzyme in the mitochondrial electron transport chain which drives oxidative phosphorylation. The respiratory chain contains 3 multisubunit complexes succinate dehydrogenase (complex II, CII), ubiquinol-cytochrome c oxidoreductase (cytochrome b-c1 complex, complex III, CIII) and cytochrome c oxidase (complex IV, CIV), that cooperate to transfer electrons derived from NADH and succinate to molecular oxygen, creating an electrochemical gradient over the inner membrane that drives transmembrane transport and the ATP synthase. Cytochrome c oxidase is the component of the respiratory chain that catalyzes the reduction of oxygen to water. Electrons originating from reduced cytochrome c in the intermembrane space (IMS) are transferred via the dinuclear copper A center (CU(A)) of subunit 2 and heme A of subunit 1 to the active site in subunit 1, a binuclear center (BNC) formed by heme A3 and copper B (CU(B)). The BNC reduces molecular oxygen to 2 water molecules using 4 electrons from cytochrome c in the IMS and 4 protons from the mitochondrial matrix. The sequence is that of Cytochrome c oxidase subunit 3 (MT-CO3) from Halichoerus grypus (Gray seal).